The chain runs to 461 residues: Cysteine--tRNA ligase (461 aa).

Position 29 (cysteine 29) interacts with Zn(2+). Residues 31-41 (PTVYNYAHIGN) carry the 'HIGH' region motif. Cysteine 214, histidine 239, and glutamate 243 together coordinate Zn(2+). The short motif at 271 to 275 (KMSKS) is the 'KMSKS' region element. Lysine 274 serves as a coordination point for ATP.

This sequence belongs to the class-I aminoacyl-tRNA synthetase family. Monomer. It depends on Zn(2+) as a cofactor.

It is found in the cytoplasm. It carries out the reaction tRNA(Cys) + L-cysteine + ATP = L-cysteinyl-tRNA(Cys) + AMP + diphosphate. The chain is Cysteine--tRNA ligase from Hyphomonas neptunium (strain ATCC 15444).